A 283-amino-acid chain; its full sequence is Pantothenate synthetase (283 aa).

26 to 33 contacts ATP; the sequence is MGNLHAGH. The active-site Proton donor is histidine 33. (R)-pantoate is bound at residue glutamine 57. Glutamine 57 lines the beta-alanine pocket. 144-147 is an ATP binding site; it reads GRKD. A (R)-pantoate-binding site is contributed by glutamine 150. Residues leucine 173 and 181 to 184 each bind ATP; that span reads MSSR.

It belongs to the pantothenate synthetase family. Homodimer.

Its subcellular location is the cytoplasm. It catalyses the reaction (R)-pantoate + beta-alanine + ATP = (R)-pantothenate + AMP + diphosphate + H(+). The protein operates within cofactor biosynthesis; (R)-pantothenate biosynthesis; (R)-pantothenate from (R)-pantoate and beta-alanine: step 1/1. Catalyzes the condensation of pantoate with beta-alanine in an ATP-dependent reaction via a pantoyl-adenylate intermediate. In Thiobacillus denitrificans (strain ATCC 25259 / T1), this protein is Pantothenate synthetase.